The following is a 151-amino-acid chain: Cell division protein SepF (151 aa).

Positions 17-29 (DNEDDYQDQEDEQ) are enriched in acidic residues. The disordered stretch occupies residues 17 to 42 (DNEDDYQDQEDEQAQQPAPEQPVDNH).

Belongs to the SepF family. As to quaternary structure, homodimer. Interacts with FtsZ.

The protein localises to the cytoplasm. In terms of biological role, cell division protein that is part of the divisome complex and is recruited early to the Z-ring. Probably stimulates Z-ring formation, perhaps through the cross-linking of FtsZ protofilaments. Its function overlaps with FtsA. This Lacticaseibacillus casei (strain BL23) (Lactobacillus casei) protein is Cell division protein SepF.